The chain runs to 669 residues: Alpha-1,6-mannosylglycoprotein 6-beta-N-acetylglucosaminyltransferase (669 aa).

The Cytoplasmic segment spans residues 1 to 7 (MRRRHRC). Residues 8-28 (VALLFIFSAFITPLGFFYYTI) form a helical; Signal-anchor for type II membrane protein membrane-spanning segment. The Lumenal segment spans residues 29–669 (SNESKRYSEE…EQHAICKKCL (641 aa)). 4 N-linked (GlcNAc...) asparagine glycosylation sites follow: Asn30, Asn412, Asn437, and Asn626.

The protein belongs to the glycosyltransferase 18 family. As to expression, expressed in a complex subset of neurons in larvae and in the spermathecal and pharyngeal-intestinal valves and certain vulval cells of adults.

It is found in the golgi apparatus membrane. It catalyses the reaction N(4)-{beta-D-GlcNAc-(1-&gt;2)-[beta-D-GlcNAc-(1-&gt;4)]-alpha-D-Man-(1-&gt;3)-[beta-D-GlcNAc-(1-&gt;2)-alpha-D-Man-(1-&gt;6)]-beta-D-Man-(1-&gt;4)-beta-D-GlcNAc-(1-&gt;4)-beta-D-GlcNAc}-L-asparaginyl-[protein] + UDP-N-acetyl-alpha-D-glucosamine = N(4)-{beta-D-GlcNAc-(1-&gt;2)-[beta-D-GlcNAc-(1-&gt;4)]-alpha-D-Man-(1-&gt;3)-[beta-D-GlcNAc-(1-&gt;2)-[beta-D-GlcNAc-(1-&gt;6)]-alpha-D-Man-(1-&gt;6)]-beta-D-Man-(1-&gt;4)-beta-D-GlcNAc-(1-&gt;4)-beta-D-GlcNAc}-L-asparaginyl-[protein] + UDP + H(+). The protein operates within protein modification; protein glycosylation. In terms of biological role, catalyzes the addition of N-acetylglucosamine (GlcNAc) in beta 1-6 linkage to the alpha-linked mannose of biantennary N-linked oligosaccharides. The sequence is that of Alpha-1,6-mannosylglycoprotein 6-beta-N-acetylglucosaminyltransferase (gly-2) from Caenorhabditis elegans.